The chain runs to 165 residues: Large ribosomal subunit protein uL10 (165 aa).

It belongs to the universal ribosomal protein uL10 family. In terms of assembly, part of the ribosomal stalk of the 50S ribosomal subunit. The N-terminus interacts with L11 and the large rRNA to form the base of the stalk. The C-terminus forms an elongated spine to which L12 dimers bind in a sequential fashion forming a multimeric L10(L12)X complex.

Functionally, forms part of the ribosomal stalk, playing a central role in the interaction of the ribosome with GTP-bound translation factors. The sequence is that of Large ribosomal subunit protein uL10 from Edwardsiella ictaluri (strain 93-146).